The sequence spans 231 residues: Killer cell lectin-like receptor subfamily F member 1 (231 aa).

Topologically, residues 1-38 (MQDEERYMTLNVQSKKRTSTQTTQLTFKDYSVVLHWYK) are cytoplasmic. Tyrosine 7 bears the Phosphotyrosine mark. A helical; Signal-anchor for type II membrane protein membrane pass occupies residues 39 to 59 (ILLGISGTLNGILALALISLI). The Extracellular portion of the chain corresponds to 60–231 (LLVSQGVLLK…SSVFKWICQY (172 aa)). 4 N-linked (GlcNAc...) asparagine glycosylation sites follow: asparagine 77, asparagine 91, asparagine 96, and asparagine 176. The region spanning 121–230 (YRGKCYWFSN…CSSVFKWICQ (110 aa)) is the C-type lectin domain. 2 disulfides stabilise this stretch: cysteine 142/cysteine 229 and cysteine 208/cysteine 221.

In terms of assembly, homodimer. Interacts with CLEC2B. Post-translationally, phosphorylated on Tyr-7; this phosphorylation is required for NKp80/KLRF1-mediated cytotoxicity.

It is found in the membrane. Functions as an activating receptor involved in immunosurveillance upon binding to various ligands displayed at the surface of myeloid cells. Upon interaction with CLEC2B ligand, stimulates NK-cell cytotoxicity and cytokine production leading to the cytolysis of malignant CLEC2B-expressing myeloid cells. Actviation of the common cytotoxicity pathway involves SRC and SYK kinases. This chain is Killer cell lectin-like receptor subfamily F member 1 (KLRF1), found in Macaca fascicularis (Crab-eating macaque).